The chain runs to 208 residues: Small ribosomal subunit protein uS4 (208 aa).

Residues 31-50 (SALDKRAYGPGQHGQRRTKT) form a disordered region. Residues 98-161 (RRLDNVVYRM…KSNPQVVRAM (64 aa)) form the S4 RNA-binding domain.

Belongs to the universal ribosomal protein uS4 family. As to quaternary structure, part of the 30S ribosomal subunit. Contacts protein S5. The interaction surface between S4 and S5 is involved in control of translational fidelity.

Its function is as follows. One of the primary rRNA binding proteins, it binds directly to 16S rRNA where it nucleates assembly of the body of the 30S subunit. With S5 and S12 plays an important role in translational accuracy. The polypeptide is Small ribosomal subunit protein uS4 (Helicobacter pylori (strain J99 / ATCC 700824) (Campylobacter pylori J99)).